The sequence spans 192 residues: Protein GrpE (192 aa).

Residues 1–20 show a composition bias toward basic and acidic residues; the sequence is MEERNEQVVEEVKEEVKEAQ. The segment at 1–34 is disordered; that stretch reads MEERNEQVVEEVKEEVKEAQVEEAVTSEDSEETV. Residues 25–34 show a composition bias toward acidic residues; the sequence is VTSEDSEETV.

The protein belongs to the GrpE family. In terms of assembly, homodimer.

Its subcellular location is the cytoplasm. Its function is as follows. Participates actively in the response to hyperosmotic and heat shock by preventing the aggregation of stress-denatured proteins, in association with DnaK and GrpE. It is the nucleotide exchange factor for DnaK and may function as a thermosensor. Unfolded proteins bind initially to DnaJ; upon interaction with the DnaJ-bound protein, DnaK hydrolyzes its bound ATP, resulting in the formation of a stable complex. GrpE releases ADP from DnaK; ATP binding to DnaK triggers the release of the substrate protein, thus completing the reaction cycle. Several rounds of ATP-dependent interactions between DnaJ, DnaK and GrpE are required for fully efficient folding. This is Protein GrpE from Bacillus cereus (strain AH187).